The sequence spans 87 residues: Probable Fe(2+)-trafficking protein (87 aa).

Belongs to the Fe(2+)-trafficking protein family.

Its function is as follows. Could be a mediator in iron transactions between iron acquisition and iron-requiring processes, such as synthesis and/or repair of Fe-S clusters in biosynthetic enzymes. This Francisella tularensis subsp. holarctica (strain FTNF002-00 / FTA) protein is Probable Fe(2+)-trafficking protein.